Reading from the N-terminus, the 392-residue chain is Galactokinase (392 aa).

Residue 40–43 coordinates substrate; sequence EHID. Residues serine 74 and 128-134 each bind ATP; that span reads GSGLSSS. Residues serine 134 and glutamate 167 each coordinate Mg(2+). The active-site Proton acceptor is the aspartate 179. Residue tyrosine 229 coordinates substrate.

Belongs to the GHMP kinase family. GalK subfamily.

It localises to the cytoplasm. The catalysed reaction is alpha-D-galactose + ATP = alpha-D-galactose 1-phosphate + ADP + H(+). It functions in the pathway carbohydrate metabolism; galactose metabolism. Functionally, catalyzes the transfer of the gamma-phosphate of ATP to D-galactose to form alpha-D-galactose-1-phosphate (Gal-1-P). The sequence is that of Galactokinase from Clostridium tetani (strain Massachusetts / E88).